The chain runs to 183 residues: ATP-dependent protease subunit HslV (183 aa).

Thr13 is a catalytic residue. Residues Gly168, Cys171, and Thr174 each coordinate Na(+).

Belongs to the peptidase T1B family. HslV subfamily. A double ring-shaped homohexamer of HslV is capped on each side by a ring-shaped HslU homohexamer. The assembly of the HslU/HslV complex is dependent on binding of ATP.

It localises to the cytoplasm. The enzyme catalyses ATP-dependent cleavage of peptide bonds with broad specificity.. Allosterically activated by HslU binding. Functionally, protease subunit of a proteasome-like degradation complex believed to be a general protein degrading machinery. This is ATP-dependent protease subunit HslV from Xylella fastidiosa (strain M23).